The primary structure comprises 210 residues: 3-hexulose-6-phosphate synthase (210 aa).

The protein belongs to the HPS/KGPDC family. HPS subfamily.

It catalyses the reaction D-ribulose 5-phosphate + formaldehyde = D-arabino-hex-3-ulose 6-phosphate. The protein operates within one-carbon metabolism; formaldehyde assimilation via RuMP pathway; D-fructose 6-phosphate from D-ribulose 5-phosphate and formaldehyde: step 1/2. In terms of biological role, catalyzes the condensation of ribulose 5-phosphate with formaldehyde to form 3-hexulose 6-phosphate. In Staphylococcus aureus (strain MRSA252), this protein is 3-hexulose-6-phosphate synthase.